We begin with the raw amino-acid sequence, 250 residues long: Alpha/beta hydrolase nvfD (250 aa).

Active-site charge relay system residues include Asp198 and His226.

Belongs to the AB hydrolase superfamily.

Its pathway is secondary metabolite biosynthesis; terpenoid biosynthesis. Functionally, alpha/beta hydrolase; part of the gene cluster that mediates the biosynthesis of novofumigatonin, a heavily oxygenated meroterpenoid containing a unique orthoester moiety. The first step of the pathway is the synthesis of 3,5-dimethylorsellinic acid (DMOA) by the polyketide synthase nvfA via condensation of one acetyl-CoA starter unit with 3 malonyl-CoA units and 2 methylations. DMOA is then converted to farnesyl-DMOA by the farnesyltransferase nvfB. Epoxydation by FAD-dependent monooxygenase nvfK, followed by a protonation-initiated cyclization catalyzed by the terpene cyclase nvfL leads to the production of asnavolin H. The short chain dehydrogenase nvfC then as a 3-OH dehydrogenase of asnovolin H to yield chemesin D. There are two branches to synthesize asnovolin A from chemesin D. In one branch, chemesin D undergoes Baeyer-Villiger oxidation by nvfH, methylation by nvfJ, and enoyl reduction by the nvfM D enoylreductase that reduces the double bond between C-5'and C-6', to form respectively asnovolin I, asnovolin K, and asnovolin A. In the other branch, the methylation precedes the Baeyer-Villiger oxidation and the enoyl reduction to yield asnovolin A via the asnovolin J intermediate. Asnovolin A is further converted to fumigatonoid A by the Fe(II)/2-oxoglutarate-dependent dioxygenase nvfI that catalyzes an endoperoxidation reaction. The alpha/beta hydrolase nvfD then acts as an epimerase that converts fumigatonoid A to its C-5' epimer, which then undergoes spontaneous or nvfD-catalyzed lactonization. The following step utilizes the ketoreductase nvfG to produce fumigatonoid B. The dioxygenase nvfE further converts fumigatonoid B into fumigatonoid C. Finally the Fe(II)/2-oxoglutarate-dependent dioxygenase nvfF catalyzes two rounds of oxidation to transform fumigatonoid C into the end product, novofumigatonin A. In Aspergillus novofumigatus (strain IBT 16806), this protein is Alpha/beta hydrolase nvfD.